A 68-amino-acid chain; its full sequence is DNA-directed RNA polymerase subunit omega (68 aa).

This sequence belongs to the RNA polymerase subunit omega family. The RNAP catalytic core consists of 2 alpha, 1 beta, 1 beta' and 1 omega subunit. When a sigma factor is associated with the core the holoenzyme is formed, which can initiate transcription.

The catalysed reaction is RNA(n) + a ribonucleoside 5'-triphosphate = RNA(n+1) + diphosphate. In terms of biological role, promotes RNA polymerase assembly. Latches the N- and C-terminal regions of the beta' subunit thereby facilitating its interaction with the beta and alpha subunits. In Syntrophotalea carbinolica (strain DSM 2380 / NBRC 103641 / GraBd1) (Pelobacter carbinolicus), this protein is DNA-directed RNA polymerase subunit omega.